A 376-amino-acid polypeptide reads, in one-letter code: Chaperone protein DnaJ (376 aa).

The 66-residue stretch at 5–70 (DYYEILGVSK…QKRAAYDQYG (66 aa)) folds into the J domain. The CR-type zinc-finger motif lies at 131–209 (GVTKEIRIPT…CHGHGRVERS (79 aa)). Residues Cys-144, Cys-147, Cys-161, Cys-164, Cys-183, Cys-186, Cys-197, and Cys-200 each coordinate Zn(2+). 4 CXXCXGXG motif repeats span residues 144 to 151 (CDVCHGSG), 161 to 168 (CPTCHGSG), 183 to 190 (CPHCQGRG), and 197 to 204 (CNKCHGHG).

This sequence belongs to the DnaJ family. As to quaternary structure, homodimer. It depends on Zn(2+) as a cofactor.

The protein localises to the cytoplasm. Functionally, participates actively in the response to hyperosmotic and heat shock by preventing the aggregation of stress-denatured proteins and by disaggregating proteins, also in an autonomous, DnaK-independent fashion. Unfolded proteins bind initially to DnaJ; upon interaction with the DnaJ-bound protein, DnaK hydrolyzes its bound ATP, resulting in the formation of a stable complex. GrpE releases ADP from DnaK; ATP binding to DnaK triggers the release of the substrate protein, thus completing the reaction cycle. Several rounds of ATP-dependent interactions between DnaJ, DnaK and GrpE are required for fully efficient folding. Also involved, together with DnaK and GrpE, in the DNA replication of plasmids through activation of initiation proteins. This chain is Chaperone protein DnaJ, found in Escherichia coli (strain K12 / MC4100 / BW2952).